Reading from the N-terminus, the 271-residue chain is Putative phosphoenolpyruvate synthase regulatory protein (271 aa).

151 to 158 provides a ligand contact to ADP; it reads GVSRSGKT.

This sequence belongs to the pyruvate, phosphate/water dikinase regulatory protein family. PSRP subfamily.

The catalysed reaction is [pyruvate, water dikinase] + ADP = [pyruvate, water dikinase]-phosphate + AMP + H(+). It catalyses the reaction [pyruvate, water dikinase]-phosphate + phosphate + H(+) = [pyruvate, water dikinase] + diphosphate. Functionally, bifunctional serine/threonine kinase and phosphorylase involved in the regulation of the phosphoenolpyruvate synthase (PEPS) by catalyzing its phosphorylation/dephosphorylation. The sequence is that of Putative phosphoenolpyruvate synthase regulatory protein from Burkholderia ambifaria (strain MC40-6).